The primary structure comprises 31 residues: Chassatide C6 (31 aa).

A cross-link (cyclopeptide (Gly-Asn)) is located at residues 1–31 (GVIPCGESCVFIPCISSVIGCSCKNKVCYRN). Disulfide bonds link C5-C21, C9-C23, and C14-C28.

This is a cyclic peptide. Expressed in fruit, pedicel, root and stem but not in leaf (at protein level).

In terms of biological role, probably participates in a plant defense mechanism. This chain is Chassatide C6, found in Chassalia chartacea (Chassalia curviflora).